Here is a 240-residue protein sequence, read N- to C-terminus: MSEVKYKRVILKLSGEALAGEKGFGINPPVIKTVAEELKDVYDMGVQIAIVVGGGNMWRGEAGAQMGMERAQADYIGMLATIMNALALQDNLESIGVPTRVQTSIEMRQIAEPYIRRKAMRHLEKRRIVIFAGGTGSPYFSTDTTAALRAAEINADAILMAKNGVDGVYSADPNKDASAVKFDTLTHLDIINKGLQVMDTTASSLSMDNDIPVVVFNLNEPGNIRKVVAGEHIGTTVRGK.

12 to 15 (KLSG) is an ATP binding site. Residues 20 to 25 (GEKGFG) are involved in allosteric activation by GTP. Gly-54 lines the UMP pocket. Gly-55 and Arg-59 together coordinate ATP. Residues Asp-74 and 135–142 (TGSPYFST) each bind UMP. The ATP site is built by Asn-163, Tyr-169, and Asp-172.

The protein belongs to the UMP kinase family. Homohexamer.

It is found in the cytoplasm. The catalysed reaction is UMP + ATP = UDP + ADP. The protein operates within pyrimidine metabolism; CTP biosynthesis via de novo pathway; UDP from UMP (UMPK route): step 1/1. Allosterically activated by GTP. Inhibited by UTP. Functionally, catalyzes the reversible phosphorylation of UMP to UDP. The chain is Uridylate kinase from Lactiplantibacillus plantarum (strain ATCC BAA-793 / NCIMB 8826 / WCFS1) (Lactobacillus plantarum).